Consider the following 326-residue polypeptide: (+)-T-muurolol synthase ((2E,6E)-farnesyl diphosphate cyclizing) (326 aa).

Mg(2+) contacts are provided by aspartate 81 and aspartate 85. The short motif at 81-85 (DDQCD) is the DDXXD motif element. Position 175 (arginine 175) interacts with substrate. Mg(2+) is bound by residues asparagine 221 and serine 225. Residue lysine 228 coordinates substrate. Glutamate 229 is a binding site for Mg(2+). A substrate-binding site is contributed by 309 to 310 (RY).

The protein belongs to the terpene synthase family. The cofactor is Mg(2+).

It catalyses the reaction (2E,6E)-farnesyl diphosphate + H2O = (+)-T-muurolol + diphosphate. Its pathway is secondary metabolite biosynthesis; terpenoid biosynthesis. Its function is as follows. Catalyzes the conversion of (2E,6E)-farnesyl diphosphate (FPP) into (+)-T-muurolol via a 1,10-cyclization, which requires isomerization of FPP to nerolidyl diphosphate (NPP) and then abstraction of the pyrophosphate from intermediate NPP leading to a (E,Z)-germacradienyl (helminthogermacradienyl) cation. The chain is (+)-T-muurolol synthase ((2E,6E)-farnesyl diphosphate cyclizing) from Roseiflexus castenholzii (strain DSM 13941 / HLO8).